The primary structure comprises 305 residues: Serine/threonine-protein phosphatase PP-X isozyme 1 (305 aa).

The Mn(2+) site is built by D51, H53, D79, and N111. H112 serves as the catalytic Proton donor. Positions 161 and 236 each coordinate Mn(2+).

This sequence belongs to the PPP phosphatase family. PP-4 (PP-X) subfamily. Interacts with TAP46. Mn(2+) serves as cofactor. In terms of tissue distribution, ubiquitous, mostly expressed in root mersitems, flowers, and vascular tissues.

It is found in the plastid stroma. The catalysed reaction is O-phospho-L-seryl-[protein] + H2O = L-seryl-[protein] + phosphate. It catalyses the reaction O-phospho-L-threonyl-[protein] + H2O = L-threonyl-[protein] + phosphate. The chain is Serine/threonine-protein phosphatase PP-X isozyme 1 (PPX1) from Arabidopsis thaliana (Mouse-ear cress).